A 134-amino-acid chain; its full sequence is Profilin-2 (134 aa).

The cysteines at positions 13 and 118 are disulfide-linked. An Involved in PIP2 interaction motif is present at residues 84–100 (AVIRGKKGSGGITIKKT). Thr114 is subject to Phosphothreonine.

This sequence belongs to the profilin family. As to quaternary structure, occurs in many kinds of cells as a complex with monomeric actin in a 1:1 ratio. Post-translationally, phosphorylated by MAP kinases.

The protein resides in the cytoplasm. The protein localises to the cytoskeleton. Binds to actin and affects the structure of the cytoskeleton. At high concentrations, profilin prevents the polymerization of actin, whereas it enhances it at low concentrations. In Olea europaea (Common olive), this protein is Profilin-2.